A 556-amino-acid polypeptide reads, in one-letter code: uncharacterized protein (556 aa).

Disordered regions lie at residues 1-40 (MSNSDKNNNNNTNNNNNNNNNNNGNFGIWEEPDDDSTNEN), 80-243 (NTTQ…KQSW), 278-324 (YDSD…SSLP), 363-391 (RTKQIKKVQQQQQQSSKSKPNNNNNKFVD), and 422-525 (DSKQ…ENSA). A compositionally biased stretch (low complexity) spans 7-25 (NNNNNTNNNNNNNNNNNGN). Positions 30 to 40 (EEPDDDSTNEN) are enriched in acidic residues. Composition is skewed to low complexity over residues 80–133 (NTTQ…GTRS) and 164–181 (NDNNDNKNNNKNNNNDSN). Residues 182–192 (IVDDDEDEEEF) show a composition bias toward acidic residues. Over residues 207–226 (STSSPSSTSSPIVSPQTQTS) the composition is skewed to low complexity. Residues 227-243 (KLESSMDVSPSSGKQSW) show a composition bias toward polar residues. Low complexity-rich tracts occupy residues 292–322 (NNSSTTTNNNNNNNNNTTTTTTTTTTTNSSS), 369–388 (KVQQQQQQSSKSKPNNNNNK), and 425–525 (QQNV…ENSA). Residues 528-548 (GSFIKNAVIFIFILLLMVVGF) form a helical membrane-spanning segment.

It is found in the membrane. This is an uncharacterized protein from Dictyostelium discoideum (Social amoeba).